The primary structure comprises 342 residues: S-adenosylmethionine:tRNA ribosyltransferase-isomerase (342 aa).

It belongs to the QueA family. In terms of assembly, monomer.

The protein resides in the cytoplasm. It catalyses the reaction 7-aminomethyl-7-carbaguanosine(34) in tRNA + S-adenosyl-L-methionine = epoxyqueuosine(34) in tRNA + adenine + L-methionine + 2 H(+). It functions in the pathway tRNA modification; tRNA-queuosine biosynthesis. Functionally, transfers and isomerizes the ribose moiety from AdoMet to the 7-aminomethyl group of 7-deazaguanine (preQ1-tRNA) to give epoxyqueuosine (oQ-tRNA). In Streptococcus pneumoniae (strain Hungary19A-6), this protein is S-adenosylmethionine:tRNA ribosyltransferase-isomerase.